Consider the following 81-residue polypeptide: Trefoil factor 3 (81 aa).

Residues 1–22 (METRALWLMLLVVLVAGSSGIA) form the signal peptide. The 44-residue stretch at 31–74 (SQCMVPANVRVDCGYPSVTSEQCNNRGCCFDSSIPNVPWCFKPL) folds into the P-type domain. 3 cysteine pairs are disulfide-bonded: Cys-33–Cys-59, Cys-43–Cys-58, and Cys-53–Cys-70.

Monomer. Homodimer; disulfide-linked. As to expression, expressed in goblet cells of the intestines and colon (at protein level). Expressed abundantly in goblet cells of intestine and colon, and at low levels in stomach. No expression in brain, lung, spleen, kidney, uterus, pancreas, liver, heart or thymus.

The protein localises to the secreted. It localises to the extracellular space. The protein resides in the extracellular matrix. It is found in the cytoplasm. In terms of biological role, involved in the maintenance and repair of the intestinal mucosa. Promotes the mobility of epithelial cells in healing processes (motogen). In Mus musculus (Mouse), this protein is Trefoil factor 3 (Tff3).